The sequence spans 143 residues: Interleukin-3 (143 aa).

An N-terminal signal peptide occupies residues 1 to 19 (MSRLPVLLLLHLLVSPGLQ). Cys-35 and Cys-103 are disulfide-bonded. An N-linked (GlcNAc...) asparagine glycan is attached at Asn-89.

The protein belongs to the IL-3 family. As to quaternary structure, monomer. As to expression, activated T-cells, mast cells, natural killer cells.

The protein resides in the secreted. In terms of biological role, granulocyte/macrophage colony-stimulating factors are cytokines that act in hematopoiesis by controlling the production, differentiation, and function of 2 related white cell populations of the blood, the granulocytes and the monocytes-macrophages. Functionally, this CSF induces granulocytes, macrophages, mast cells, stem cells, erythroid cells, eosinophils and megakaryocytes. The polypeptide is Interleukin-3 (IL3) (Macaca mulatta (Rhesus macaque)).